Reading from the N-terminus, the 241-residue chain is Phosphoadenosine 5'-phosphosulfate reductase (241 aa).

The Nucleophile; cysteine thiosulfonate intermediate role is filled by cysteine 235.

This sequence belongs to the PAPS reductase family. CysH subfamily.

It localises to the cytoplasm. It catalyses the reaction [thioredoxin]-disulfide + sulfite + adenosine 3',5'-bisphosphate + 2 H(+) = [thioredoxin]-dithiol + 3'-phosphoadenylyl sulfate. It participates in sulfur metabolism; hydrogen sulfide biosynthesis; sulfite from sulfate: step 3/3. Its function is as follows. Catalyzes the formation of sulfite from phosphoadenosine 5'-phosphosulfate (PAPS) using thioredoxin as an electron donor. The polypeptide is Phosphoadenosine 5'-phosphosulfate reductase (Xanthomonas euvesicatoria pv. vesicatoria (strain 85-10) (Xanthomonas campestris pv. vesicatoria)).